Reading from the N-terminus, the 286-residue chain is Phosphate import ATP-binding protein PstB (286 aa).

The disordered stretch occupies residues 1–27 (MEPKETLRQRWPGRGRTEETGAMKKSD). Basic and acidic residues predominate over residues 15-27 (GRTEETGAMKKSD). One can recognise an ABC transporter domain in the interval 33-281 (MTVEHLNMYY…PDRKETEDYV (249 aa)). 65–72 (GPSGCGKS) lines the ATP pocket.

The protein belongs to the ABC transporter superfamily. Phosphate importer (TC 3.A.1.7) family. As to quaternary structure, the complex is composed of two ATP-binding proteins (PstB), two transmembrane proteins (PstC and PstA) and a solute-binding protein (PstS).

It localises to the cell membrane. It carries out the reaction phosphate(out) + ATP + H2O = ADP + 2 phosphate(in) + H(+). In terms of biological role, part of the ABC transporter complex PstSACB involved in phosphate import. Responsible for energy coupling to the transport system. This Rubrobacter xylanophilus (strain DSM 9941 / JCM 11954 / NBRC 16129 / PRD-1) protein is Phosphate import ATP-binding protein PstB.